The sequence spans 218 residues: Large ribosomal subunit protein uL3 (218 aa).

Positions 133-158 (RGQGASHGAQAVHRRPGSIGGCATPG) are disordered.

The protein belongs to the universal ribosomal protein uL3 family. As to quaternary structure, part of the 50S ribosomal subunit. Forms a cluster with proteins L14 and L19.

One of the primary rRNA binding proteins, it binds directly near the 3'-end of the 23S rRNA, where it nucleates assembly of the 50S subunit. The chain is Large ribosomal subunit protein uL3 from Mycolicibacterium vanbaalenii (strain DSM 7251 / JCM 13017 / BCRC 16820 / KCTC 9966 / NRRL B-24157 / PYR-1) (Mycobacterium vanbaalenii).